A 287-amino-acid chain; its full sequence is Acetylglutamate kinase (287 aa).

Residues 64–65, R86, and N181 contribute to the substrate site; that span reads GG.

It belongs to the acetylglutamate kinase family. ArgB subfamily.

It localises to the cytoplasm. It catalyses the reaction N-acetyl-L-glutamate + ATP = N-acetyl-L-glutamyl 5-phosphate + ADP. It functions in the pathway amino-acid biosynthesis; L-arginine biosynthesis; N(2)-acetyl-L-ornithine from L-glutamate: step 2/4. In terms of biological role, catalyzes the ATP-dependent phosphorylation of N-acetyl-L-glutamate. The protein is Acetylglutamate kinase of Desulforamulus reducens (strain ATCC BAA-1160 / DSM 100696 / MI-1) (Desulfotomaculum reducens).